Here is a 340-residue protein sequence, read N- to C-terminus: Phosphoribosylformylglycinamidine cyclo-ligase (340 aa).

This sequence belongs to the AIR synthase family.

The protein resides in the cytoplasm. It carries out the reaction 2-formamido-N(1)-(5-O-phospho-beta-D-ribosyl)acetamidine + ATP = 5-amino-1-(5-phospho-beta-D-ribosyl)imidazole + ADP + phosphate + H(+). The protein operates within purine metabolism; IMP biosynthesis via de novo pathway; 5-amino-1-(5-phospho-D-ribosyl)imidazole from N(2)-formyl-N(1)-(5-phospho-D-ribosyl)glycinamide: step 2/2. In Streptococcus pyogenes serotype M6 (strain ATCC BAA-946 / MGAS10394), this protein is Phosphoribosylformylglycinamidine cyclo-ligase.